Reading from the N-terminus, the 187-residue chain is Adenylate kinase (187 aa).

12 to 17 (GAGKGT) lines the ATP pocket. The tract at residues 32–61 (STGDIFRANLAENTELGQKARQFMDAGDLV) is NMP. AMP contacts are provided by residues Thr-33, Arg-38, 59-61 (DLV), 87-90 (GYPR), and Gln-94. An LID region spans residues 128 to 134 (GRGRADD). Arg-129 provides a ligand contact to ATP. Residues Arg-131 and Arg-142 each coordinate AMP. Arg-170 contacts ATP.

It belongs to the adenylate kinase family. In terms of assembly, monomer.

It is found in the cytoplasm. It catalyses the reaction AMP + ATP = 2 ADP. The protein operates within purine metabolism; AMP biosynthesis via salvage pathway; AMP from ADP: step 1/1. Catalyzes the reversible transfer of the terminal phosphate group between ATP and AMP. Plays an important role in cellular energy homeostasis and in adenine nucleotide metabolism. The sequence is that of Adenylate kinase from Leuconostoc mesenteroides subsp. mesenteroides (strain ATCC 8293 / DSM 20343 / BCRC 11652 / CCM 1803 / JCM 6124 / NCDO 523 / NBRC 100496 / NCIMB 8023 / NCTC 12954 / NRRL B-1118 / 37Y).